A 213-amino-acid polypeptide reads, in one-letter code: Ras-like protein rasU (213 aa).

GTP is bound at residue 21–28 (GDGGVGKT). An Effector region motif is present at residues 43–51 (YDPTIEDLY). GTP is bound by residues 68-72 (DTAGQ) and 126-129 (NKSD). Position 210 is a cysteine methyl ester (Cys-210). A lipid anchor (S-geranylgeranyl cysteine) is attached at Cys-210. Positions 211–213 (KMI) are cleaved as a propeptide — removed in mature form.

It belongs to the small GTPase superfamily. Ras family.

It localises to the cell membrane. The enzyme catalyses GTP + H2O = GDP + phosphate + H(+). In terms of biological role, ras proteins bind GDP/GTP and possess intrinsic GTPase activity. In Dictyostelium discoideum (Social amoeba), this protein is Ras-like protein rasU (rasU).